A 352-amino-acid polypeptide reads, in one-letter code: GTPase Obg (352 aa).

The 159-residue stretch at 1–159 (MHFLDQAKIF…MYVWLRLKLL (159 aa)) folds into the Obg domain. The tract at residues 122-142 (DGGRGNASYKTSTNRAPRQHG) is disordered. The OBG-type G domain occupies 160–328 (ADAGLVGLPN…LLDAVLEYLP (169 aa)). GTP contacts are provided by residues 166–173 (GLPNAGKS), 191–195 (FTTLR), 212–215 (DIPG), 280–283 (NKID), and 309–311 (SGA). Residues S173 and T193 each contribute to the Mg(2+) site.

The protein belongs to the TRAFAC class OBG-HflX-like GTPase superfamily. OBG GTPase family. As to quaternary structure, monomer. Mg(2+) serves as cofactor.

It localises to the cytoplasm. Functionally, an essential GTPase which binds GTP, GDP and possibly (p)ppGpp with moderate affinity, with high nucleotide exchange rates and a fairly low GTP hydrolysis rate. Plays a role in control of the cell cycle, stress response, ribosome biogenesis and in those bacteria that undergo differentiation, in morphogenesis control. The protein is GTPase Obg of Novosphingobium aromaticivorans (strain ATCC 700278 / DSM 12444 / CCUG 56034 / CIP 105152 / NBRC 16084 / F199).